The sequence spans 256 residues: Gluconate 5-dehydrogenase (256 aa).

15 to 39 provides a ligand contact to NADP(+); sequence LVTGASRGIGLTLAKGLARYGAEVV. Residue Ser-147 participates in substrate binding. Tyr-160 acts as the Proton acceptor in catalysis.

Belongs to the short-chain dehydrogenases/reductases (SDR) family. As to quaternary structure, homodimer.

It is found in the cytoplasm. It carries out the reaction D-gluconate + NADP(+) = 5-dehydro-D-gluconate + NADPH + H(+). In terms of biological role, catalyzes the reversible NADP-dependent oxidation of gluconate to 5-ketogluconate. Is involved in the non-phosphorylative, ketogenic oxidation of glucose. Is almost inactive with NAD as cosubstrate. Displays high substrate specificity since D-Glucose, D-sorbitol, and D-mannitol are not oxidized by the enzyme, and 2-ketogluconate and L-sorbose are not reduced. Can accept D-fructose as a substrate, with a rate that is only 10% of the rate of 5-ketogluconate reduction. This is Gluconate 5-dehydrogenase from Gluconobacter oxydans (strain 621H) (Gluconobacter suboxydans).